The following is a 505-amino-acid chain: MSVKLKADEISSIIKERIENYNLSVDIEETGKVISVADGVANVYGLKNVMAGEMVEFETGEKGMALNLEESSVGIVVLGKSSSIKEGSSVKRLGKLLRVPVGDALIGRVVNALGEPIDAKGAIEATETRFIEEKAKGIMARKSVHEPLQTGIKAIDGLVPIGRGQRELIIGDRQTGKTTVAIDTIINQKGQDVICIYVAIGQKQSTVAQVVKKLEEYGAMDYTIVVNASASDAPALQYLAPYAGVTMGEYFRDNSRHALIIYDDLSKHAVAYREMSLILRRPPGREAYPGDVFYLHSRLLERASKLSDKLGAGSLTALPIIETQAGDVSAYIPTNVISITDGQIFLESDLFNSGIRPAINVGLSVSRVGGSAQIKAIKKVSGTLRLDLAQYRELQAFAQFASDLDESSRKQLERGQRMVEVLKQPPYSPLPVENQVIIIYAGSQGYLDDIPVSAVTKFEAELYPYIEAKYPEIFEQIRNKKALDKDIEEALSKALNEFKATFSAE.

171–178 contacts ATP; that stretch reads GDRQTGKT.

The protein belongs to the ATPase alpha/beta chains family. F-type ATPases have 2 components, CF(1) - the catalytic core - and CF(0) - the membrane proton channel. CF(1) has five subunits: alpha(3), beta(3), gamma(1), delta(1), epsilon(1). CF(0) has three main subunits: a(1), b(2) and c(9-12). The alpha and beta chains form an alternating ring which encloses part of the gamma chain. CF(1) is attached to CF(0) by a central stalk formed by the gamma and epsilon chains, while a peripheral stalk is formed by the delta and b chains.

Its subcellular location is the cell inner membrane. The enzyme catalyses ATP + H2O + 4 H(+)(in) = ADP + phosphate + 5 H(+)(out). Its function is as follows. Produces ATP from ADP in the presence of a proton gradient across the membrane. The alpha chain is a regulatory subunit. The protein is ATP synthase subunit alpha of Campylobacter fetus subsp. fetus (strain 82-40).